The following is a 202-amino-acid chain: CASP-like protein 1U4 (202 aa).

Residues 1–10 (MCLPAKWLHP) are Cytoplasmic-facing. The chain crosses the membrane as a helical span at residues 11–31 (VSLIFRVAGIGLAAVSAAAML). Residues 32–56 (TASQCTVYADYGWRPRTVTYSDFPA) lie on the Extracellular side of the membrane. Residues 57-77 (FVYLVAATAIATLLEAVALFL) traverse the membrane as a helical segment. The Cytoplasmic segment spans residues 78 to 94 (SWSKKGKSKKSWRVLTM). The chain crosses the membrane as a helical span at residues 95–115 (LLLGAVVPALLYTSAGAAFAV). At 116–146 (GWEDIYYYLEPIGRRFSVCRSSVAGGRFCEH) the chain is on the extracellular side. Residues 147–167 (VHVSMWLALGAAVAVSFAEFL) form a helical membrane-spanning segment. The Cytoplasmic portion of the chain corresponds to 168–202 (TTFRWCHGSGSCSDSDSDSDSDSESGCGHGCHCKH).

The protein belongs to the Casparian strip membrane proteins (CASP) family. Homodimer and heterodimers.

It localises to the cell membrane. This is CASP-like protein 1U4 from Sorghum bicolor (Sorghum).